Here is a 124-residue protein sequence, read N- to C-terminus: Translation initiation factor 5A (124 aa).

K36 carries the hypusine modification.

This sequence belongs to the eIF-5A family.

It localises to the cytoplasm. Its function is as follows. Functions by promoting the formation of the first peptide bond. This is Translation initiation factor 5A from Haloquadratum walsbyi (strain DSM 16790 / HBSQ001).